A 695-amino-acid polypeptide reads, in one-letter code: MFDVESLLKKLNVSEDKKENILQKEQLKKNLETLYTNFDTDNKLLFTLACTAPKKIDILIFGILINENVIKNDATLRASMKFAIKNTDVTYEELKDFILKNTKSKEEVSEIINKACLSGKSKKEVYIILKNKLPFEDSKYLMDEVNKFEIDTSKSKKVKDWLEEGEVSMLHKPGDNPQLNEKILKDHLERTGGKVVTRFPPEPNGILHIGHAKAINLDFGYAEKYNGICYLRFDDTNPRNEEDYYFESIIEDVKWLGFEPYAITSSSKYFGDMCELAEKLILKDKAYICELSNEELKKRRRMLSEAFETDKDKSIEELGLILSPYRNREISENLKIFREMVEKKHKEGDYTLRFKMDIRSKNPMMFDLVGMRIIDCDHVVTKDKYNLYPSYEFALCVSDSLEDVTHSFCTREFFTRQESYKWLLDALEIYKPVQWEFSRLNISNTVLSKRKIVPLKKYGIELDDPRLYTIKGMRRRGIPPQAINNFVKSLGITYAETIIDNKKFESFIRDELNKTTQRVMCVMDPLKIYIRNAKEQEISIPNSNQKIIFKPYIYIEKSDFKMEDDDKDFLRFTPNQSVGLYMFGAIKFIKFDNDMIIAELTNETPKKFIHWVSCDSIKVTIRLYDPLFRSFNPEEGNYLDNINLDSLKTVVGYCDDRIKGCEVEDKFQFQRVGYFCVDPDTTPENIVFNRIITLI.

The 'HIGH' region motif lies at 201-211 (PEPNGILHIGH). ATP is bound by residues 202–204 (EPN) and 208–214 (HIGHAKA). L-glutamine is bound by residues Asp-234 and Tyr-391. ATP-binding positions include Thr-410, 439-440 (RL), and 447-449 (LSK). A 'KMSKS' region motif is present at residues 446 to 450 (VLSKR).

Belongs to the class-I aminoacyl-tRNA synthetase family.

The enzyme catalyses tRNA(Gln) + L-glutamine + ATP = L-glutaminyl-tRNA(Gln) + AMP + diphosphate. The sequence is that of Probable glutamine--tRNA ligase from Vairimorpha ceranae (strain BRL01) (Microsporidian parasite).